A 162-amino-acid chain; its full sequence is Cyanate hydratase (162 aa).

Active-site residues include Arg102, Glu105, and Ser128.

Belongs to the cyanase family.

It carries out the reaction cyanate + hydrogencarbonate + 3 H(+) = NH4(+) + 2 CO2. Catalyzes the reaction of cyanate with bicarbonate to produce ammonia and carbon dioxide. The chain is Cyanate hydratase from Mycosarcoma maydis (Corn smut fungus).